A 156-amino-acid chain; its full sequence is Lipoprotein signal peptidase (156 aa).

The next 4 helical transmembrane spans lie at 8–28 (IYINIIFFIITVDFYSKKWIL), 39–59 (VFFILNLFHVHNFGAAFSILS), 67–87 (YFLLIFSIIIILAIIKIMIKF), and 99–119 (SLILAGAIGNLIDRINYGFVI). Catalysis depends on residues Asp-120 and Asp-138. A helical transmembrane segment spans residues 129 to 149 (WHFATFNIADFSIFIGMIMII).

It belongs to the peptidase A8 family.

Its subcellular location is the cell inner membrane. The enzyme catalyses Release of signal peptides from bacterial membrane prolipoproteins. Hydrolyzes -Xaa-Yaa-Zaa-|-(S,diacylglyceryl)Cys-, in which Xaa is hydrophobic (preferably Leu), and Yaa (Ala or Ser) and Zaa (Gly or Ala) have small, neutral side chains.. It functions in the pathway protein modification; lipoprotein biosynthesis (signal peptide cleavage). Its function is as follows. This protein specifically catalyzes the removal of signal peptides from prolipoproteins. The protein is Lipoprotein signal peptidase of Buchnera aphidicola subsp. Schizaphis graminum (strain Sg).